Here is a 524-residue protein sequence, read N- to C-terminus: DEAD-box ATP-dependent RNA helicase CshA (524 aa).

The Q motif motif lies at 1–29 (MKFNELNLSADLLAEIEKAGFVEASPIQE). Residues 32–202 (IPLALEGKDV…VQFMKAPEHV (171 aa)) enclose the Helicase ATP-binding domain. 45 to 52 (AQTGTGKT) contributes to the ATP binding site. A DEAD box motif is present at residues 150 to 153 (DEAD). In terms of domain architecture, Helicase C-terminal spans 213 to 373 (LVDQYYIRVK…GLKPASVEES (161 aa)). Residues 440–524 (EKPLPFKPSG…GFVIRNKGDK (85 aa)) are disordered. The span at 463-498 (RRGDDRRERDRRGNGRRDEFKKGSRGNDRFDKEKRY) shows a compositional bias: basic and acidic residues.

It belongs to the DEAD box helicase family. CshA subfamily. In terms of assembly, oligomerizes, may be a member of the RNA degradosome.

It localises to the cytoplasm. The catalysed reaction is ATP + H2O = ADP + phosphate + H(+). Functionally, DEAD-box RNA helicase possibly involved in RNA degradation. Unwinds dsRNA in both 5'- and 3'-directions, has RNA-dependent ATPase activity. The chain is DEAD-box ATP-dependent RNA helicase CshA from Streptococcus pneumoniae serotype 4 (strain ATCC BAA-334 / TIGR4).